The primary structure comprises 182 residues: Protein canopy homolog 2 (182 aa).

The signal sequence occupies residues 1 to 20; that stretch reads MKGWGWLALLLGVLLGTAWA. Positions 24–175 constitute a Saposin B-type domain; the sequence is QDLHCGACRA…KRTDLCDHAL (152 aa). Disulfide bonds link C28–C171, C31–C164, and C86–C137. S115 carries the phosphoserine modification. The Prevents secretion from ER signature appears at 179 to 182; it reads HDEL.

It belongs to the canopy family. Interacts with MYLIP/MIR.

It is found in the endoplasmic reticulum. Positive regulator of neurite outgrowth by stabilizing myosin regulatory light chain (MRLC). It prevents MIR-mediated MRLC ubiquitination and its subsequent proteasomal degradation. This is Protein canopy homolog 2 (Cnpy2) from Mus musculus (Mouse).